The primary structure comprises 104 residues: Large ribosomal subunit protein uL23 (104 aa).

The protein belongs to the universal ribosomal protein uL23 family. In terms of assembly, part of the 50S ribosomal subunit. Contacts protein L29, and trigger factor when it is bound to the ribosome.

Its function is as follows. One of the early assembly proteins it binds 23S rRNA. One of the proteins that surrounds the polypeptide exit tunnel on the outside of the ribosome. Forms the main docking site for trigger factor binding to the ribosome. The sequence is that of Large ribosomal subunit protein uL23 from Paraburkholderia phymatum (strain DSM 17167 / CIP 108236 / LMG 21445 / STM815) (Burkholderia phymatum).